We begin with the raw amino-acid sequence, 487 residues long: V-type proton ATPase subunit B2 (487 aa).

Position 2 is an N-acetylglycine (G2).

This sequence belongs to the ATPase alpha/beta chains family. In terms of assembly, V-ATPase is a heteromultimeric enzyme composed of a peripheral catalytic V1 complex (components A to H) attached to an integral membrane V0 proton pore complex (components: a, c, c'', d and e).

It is found in the vacuole membrane. Its function is as follows. Non-catalytic subunit of the peripheral V1 complex of vacuolar ATPase. V-ATPase is responsible for acidifying a variety of intracellular compartments in eukaryotic cells. This chain is V-type proton ATPase subunit B2 (VHA-B2), found in Arabidopsis thaliana (Mouse-ear cress).